The primary structure comprises 67 residues: Large ribosomal subunit protein uL30 (67 aa).

Belongs to the universal ribosomal protein uL30 family. Part of the 50S ribosomal subunit.

This is Large ribosomal subunit protein uL30 from Hamiltonella defensa subsp. Acyrthosiphon pisum (strain 5AT).